The following is a 400-amino-acid chain: Serine/threonine transporter SstT (400 aa).

8 consecutive transmembrane segments (helical) span residues 14–34 (IIIA…VTPY), 48–68 (SVAP…FQVG), 76–96 (VLLL…IASL), 136–156 (AISE…GLAM), 177–197 (IIHK…AVTF), 211–231 (LLAV…PILV), 293–313 (LAGA…TLGI), and 334–354 (ASGV…LFGI).

The protein belongs to the dicarboxylate/amino acid:cation symporter (DAACS) (TC 2.A.23) family.

It localises to the cell inner membrane. It carries out the reaction L-serine(in) + Na(+)(in) = L-serine(out) + Na(+)(out). The enzyme catalyses L-threonine(in) + Na(+)(in) = L-threonine(out) + Na(+)(out). Functionally, involved in the import of serine and threonine into the cell, with the concomitant import of sodium (symport system). The polypeptide is Serine/threonine transporter SstT (Acinetobacter baumannii (strain SDF)).